The primary structure comprises 496 residues: UDP-glycosyltransferase 73C4 (496 aa).

Residues serine 297, 357 to 359, 374 to 382, and 396 to 399 each bind UDP-alpha-D-glucose; these read SPQ, HCGWNSTLE, and FGDQ. The disordered stretch occupies residues 450-475; sequence SDDAKERRRRVKELGESAHKAVEEGG. Residues 451-472 are compositionally biased toward basic and acidic residues; that stretch reads DDAKERRRRVKELGESAHKAVE.

Belongs to the UDP-glycosyltransferase family.

In Arabidopsis thaliana (Mouse-ear cress), this protein is UDP-glycosyltransferase 73C4 (UGT73C4).